Here is a 98-residue protein sequence, read N- to C-terminus: Prostate and testis expressed protein 3 (98 aa).

A signal peptide spans Met1–Ser20. Positions Leu21–Arg97 constitute a UPAR/Ly6 domain. Disulfide bonds link Cys23–Cys50, Cys26–Cys35, Cys42–Cys68, and Cys72–Cys88.

Belongs to the PATE family.

The protein localises to the secreted. This is Prostate and testis expressed protein 3 (Pate3) from Mus musculus (Mouse).